The chain runs to 1303 residues: DNA-directed RNA polymerase subunit beta (1303 aa).

It belongs to the RNA polymerase beta chain family. The RNAP catalytic core consists of 2 alpha, 1 beta, 1 beta' and 1 omega subunit. When a sigma factor is associated with the core the holoenzyme is formed, which can initiate transcription.

It catalyses the reaction RNA(n) + a ribonucleoside 5'-triphosphate = RNA(n+1) + diphosphate. DNA-dependent RNA polymerase catalyzes the transcription of DNA into RNA using the four ribonucleoside triphosphates as substrates. This is DNA-directed RNA polymerase subunit beta from Chlorobaculum tepidum (strain ATCC 49652 / DSM 12025 / NBRC 103806 / TLS) (Chlorobium tepidum).